Here is a 1392-residue protein sequence, read N- to C-terminus: Leucine-rich PPR motif-containing protein, mitochondrial (1392 aa).

The N-terminal 77 residues, 1–77 (MSALLRPARW…LPEEPAPVRR (77 aa)), are a transit peptide targeting the mitochondrion. PPR repeat units lie at residues 125 to 159 (LLRS…GTVY), 160 to 194 (DVSH…NIQP), 195 to 229 (NRVT…DLPI), 230 to 264 (TEAV…GIEP), 265 to 299 (GPDT…DHYF), 300 to 334 (MDRD…RRSI), 402 to 436 (HSSS…GFPI), 437 to 471 (RTHY…GVDP), 677 to 708 (VGDP…ESDM), 709 to 745 (VIGG…SAVL), 746 to 783 (DTAK…IKDA), 784 to 820 (AVLS…AKPS), 821 to 856 (SNIS…VLPR), and 953 to 987 (RDQM…NLIP). An N6-acetyllysine mark is found at Lys151 and Lys186. Lys291 carries the N6-acetyllysine modification. Residue Lys462 is modified to N6-acetyllysine. Lys749 carries the N6-acetyllysine modification. Ser1025, Ser1026, and Ser1028 each carry phosphoserine. 6 PPR repeats span residues 1030 to 1064 (GDTV…DVVF), 1065 to 1101 (SSEA…GFTL), 1102 to 1136 (NGAA…EQVP), 1137 to 1173 (SELA…IELS), 1174 to 1208 (RMVF…ENQT), and 1315 to 1349 (NDRV…NMKL). Ser1137 carries the phosphoserine modification.

As to quaternary structure, component of mRNP complexes associated with HNRPA1. Component of the complex, at least composed of LRPPRC, BECN1 and BCL2; the interactions prevent BECN1 from forming an autophagy-inducing complex with PIK3C3. Interacts with CECR2, HEBP2, MAP1S, UXT, PPARGC1A and FOXO1. Interacts (via N-terminus) with EIF4E; the interaction promotes association of EIF4E with 4ESE-containing mRNAs. Interacts with exportin XPO1/CRM1; interacts both alone and in complex with EIF4E and 4ESE-containing mRNAs to form an EIF4E-dependent mRNA export complex. Interacts with importin IPO8; the interaction occurs when LRPPRC is in its RNA-free form and returns LRPPRC to the nucleus for further export rounds. Interacts with BECN1. In terms of tissue distribution, widely expressed. Expressed in liver, brain and a subset of small diameter sensory neurons in the dorsal root ganglion (at protein level).

Its subcellular location is the mitochondrion. The protein resides in the nucleus. The protein localises to the nucleoplasm. It localises to the nucleus inner membrane. It is found in the nucleus outer membrane. May play a role in RNA metabolism in both nuclei and mitochondria. In the nucleus binds to HNRPA1-associated poly(A) mRNAs and is part of nmRNP complexes at late stages of mRNA maturation which are possibly associated with nuclear mRNA export. Positively modulates nuclear export of mRNAs containing the EIF4E sensitivity element (4ESE) by binding simultaneously to both EIF4E and the 4ESE and acting as a platform for assembly for the RNA export complex. Also binds to exportin XPO1/CRM1 to engage the nuclear pore and traffic the bound mRNAs to the cytoplasm. May bind mature mRNA in the nucleus outer membrane. In mitochondria binds to poly(A) mRNA. Plays a role in translation or stability of mitochondrially encoded cytochrome c oxidase (COX) subunits. May be involved in transcription regulation. Cooperates with PPARGC1A to regulate certain mitochondrially encoded genes and gluconeogenic genes and may regulate docking of PPARGC1A to transcription factors. Seems to be involved in the transcription regulation of the multidrug-related genes MDR1 and MVP. Part of a nuclear factor that binds to the invMED1 element of MDR1 and MVP gene promoters. Binds single-stranded DNA. Required for maintaining mitochondrial potential. Suppresses the initiation of basal levels of autophagy and mitophagy by sustaining BCL2 levels. The sequence is that of Leucine-rich PPR motif-containing protein, mitochondrial (Lrpprc) from Rattus norvegicus (Rat).